The primary structure comprises 412 residues: L-cysteine:1D-myo-inositol 2-amino-2-deoxy-alpha-D-glucopyranoside ligase (412 aa).

Zn(2+) is bound at residue Cys-45. Residues 45–48, Thr-60, and 83–85 contribute to the L-cysteinyl-5'-AMP site; these read CGIT and NIT. The 'HIGH' region signature appears at 47–57; the sequence is ITPYDAAHLGH. A 'ERGGDP' region motif is present at residues 185-190; sequence ERGGDP. Residue Trp-225 coordinates L-cysteinyl-5'-AMP. A Zn(2+)-binding site is contributed by Cys-229. 247–249 is a binding site for L-cysteinyl-5'-AMP; the sequence is GDD. Residue His-254 coordinates Zn(2+). Position 281 (Val-281) interacts with L-cysteinyl-5'-AMP. The 'KMSKS' region signature appears at 287 to 291; that stretch reads KMSKS.

It belongs to the class-I aminoacyl-tRNA synthetase family. MshC subfamily. In terms of assembly, monomer. It depends on Zn(2+) as a cofactor.

The catalysed reaction is 1D-myo-inositol 2-amino-2-deoxy-alpha-D-glucopyranoside + L-cysteine + ATP = 1D-myo-inositol 2-(L-cysteinylamino)-2-deoxy-alpha-D-glucopyranoside + AMP + diphosphate + H(+). In terms of biological role, catalyzes the ATP-dependent condensation of GlcN-Ins and L-cysteine to form L-Cys-GlcN-Ins. This chain is L-cysteine:1D-myo-inositol 2-amino-2-deoxy-alpha-D-glucopyranoside ligase, found in Thermobifida fusca (strain YX).